Here is a 257-residue protein sequence, read N- to C-terminus: Acetylglutamate kinase (257 aa).

Residues 43–44, Arg65, and Asn157 contribute to the substrate site; that span reads GG. ATP-binding positions include 180-185 and 208-210; these read DVSGIL and IIT.

This sequence belongs to the acetylglutamate kinase family. ArgB subfamily. Homodimer.

It localises to the cytoplasm. The catalysed reaction is N-acetyl-L-glutamate + ATP = N-acetyl-L-glutamyl 5-phosphate + ADP. It participates in amino-acid biosynthesis; L-arginine biosynthesis; N(2)-acetyl-L-ornithine from L-glutamate: step 2/4. Catalyzes the ATP-dependent phosphorylation of N-acetyl-L-glutamate. The polypeptide is Acetylglutamate kinase (Photorhabdus laumondii subsp. laumondii (strain DSM 15139 / CIP 105565 / TT01) (Photorhabdus luminescens subsp. laumondii)).